The following is a 223-amino-acid chain: Ribonuclease HII (223 aa).

The RNase H type-2 domain occupies 1-219; the sequence is MMIAGIDEAG…VENIREELEK (219 aa). A divalent metal cation-binding residues include aspartate 7, glutamate 8, and aspartate 105.

Belongs to the RNase HII family. It depends on Mn(2+) as a cofactor. Mg(2+) serves as cofactor.

It localises to the cytoplasm. It carries out the reaction Endonucleolytic cleavage to 5'-phosphomonoester.. In terms of biological role, endonuclease that specifically degrades the RNA of RNA-DNA hybrids. The polypeptide is Ribonuclease HII (Methanosarcina acetivorans (strain ATCC 35395 / DSM 2834 / JCM 12185 / C2A)).